A 203-amino-acid chain; its full sequence is Shikimate kinase (203 aa).

Residue 38 to 43 (GAGKST) participates in ATP binding. Ser42 is a binding site for Mg(2+). Residues Asp60, Arg84, and Gly106 each coordinate substrate. Position 144 (Arg144) interacts with ATP. Arg163 lines the substrate pocket.

The protein belongs to the shikimate kinase family. As to quaternary structure, monomer. The cofactor is Mg(2+).

Its subcellular location is the cytoplasm. It carries out the reaction shikimate + ATP = 3-phosphoshikimate + ADP + H(+). The protein operates within metabolic intermediate biosynthesis; chorismate biosynthesis; chorismate from D-erythrose 4-phosphate and phosphoenolpyruvate: step 5/7. In terms of biological role, catalyzes the specific phosphorylation of the 3-hydroxyl group of shikimic acid using ATP as a cosubstrate. The sequence is that of Shikimate kinase from Rhodopseudomonas palustris (strain ATCC BAA-98 / CGA009).